The following is a 442-amino-acid chain: Glutamyl-tRNA reductase (442 aa).

Substrate-binding positions include 50–53, Ser109, 114–116, and Gln120; these read TCNR and EPQ. Cys51 functions as the Nucleophile in the catalytic mechanism. 189-194 is an NADP(+) binding site; it reads GAGEMA.

The protein belongs to the glutamyl-tRNA reductase family. In terms of assembly, homodimer.

It carries out the reaction (S)-4-amino-5-oxopentanoate + tRNA(Glu) + NADP(+) = L-glutamyl-tRNA(Glu) + NADPH + H(+). The protein operates within porphyrin-containing compound metabolism; protoporphyrin-IX biosynthesis; 5-aminolevulinate from L-glutamyl-tRNA(Glu): step 1/2. Its function is as follows. Catalyzes the NADPH-dependent reduction of glutamyl-tRNA(Glu) to glutamate 1-semialdehyde (GSA). The polypeptide is Glutamyl-tRNA reductase (Nitratidesulfovibrio vulgaris (strain DSM 19637 / Miyazaki F) (Desulfovibrio vulgaris)).